The sequence spans 450 residues: Phosphoglucosamine mutase (450 aa).

The active-site Phosphoserine intermediate is S101. The Mg(2+) site is built by S101, D241, D243, and D245. A Phosphoserine modification is found at S101.

This sequence belongs to the phosphohexose mutase family. Mg(2+) is required as a cofactor. Post-translationally, activated by phosphorylation.

It carries out the reaction alpha-D-glucosamine 1-phosphate = D-glucosamine 6-phosphate. Functionally, catalyzes the conversion of glucosamine-6-phosphate to glucosamine-1-phosphate. The protein is Phosphoglucosamine mutase of Ligilactobacillus salivarius (strain UCC118) (Lactobacillus salivarius).